We begin with the raw amino-acid sequence, 207 residues long: Small ribosomal subunit protein uS4c (207 aa).

Positions methionine 92 to glutamate 156 constitute an S4 RNA-binding domain.

The protein belongs to the universal ribosomal protein uS4 family. Part of the 30S ribosomal subunit. Contacts protein S5. The interaction surface between S4 and S5 is involved in control of translational fidelity.

It localises to the plastid. The protein resides in the chloroplast. Functionally, one of the primary rRNA binding proteins, it binds directly to 16S rRNA where it nucleates assembly of the body of the 30S subunit. In terms of biological role, with S5 and S12 plays an important role in translational accuracy. The chain is Small ribosomal subunit protein uS4c (rps4) from Equisetum arvense (Field horsetail).